The chain runs to 349 residues: Ribosomal RNA small subunit methyltransferase H (349 aa).

S-adenosyl-L-methionine is bound by residues 34–36 (GGH), Asp-54, Phe-81, Asp-102, and Gln-109. Residues 328 to 349 (SRTGSVQHGQAKHKGVVQRGGS) are disordered.

Belongs to the methyltransferase superfamily. RsmH family.

Its subcellular location is the cytoplasm. The enzyme catalyses cytidine(1402) in 16S rRNA + S-adenosyl-L-methionine = N(4)-methylcytidine(1402) in 16S rRNA + S-adenosyl-L-homocysteine + H(+). Specifically methylates the N4 position of cytidine in position 1402 (C1402) of 16S rRNA. This chain is Ribosomal RNA small subunit methyltransferase H, found in Dehalococcoides mccartyi (strain ATCC BAA-2100 / JCM 16839 / KCTC 5957 / BAV1).